A 382-amino-acid chain; its full sequence is D-galactonate dehydratase (382 aa).

Asp183 serves as a coordination point for Mg(2+). The active-site Proton donor is the His185. Mg(2+)-binding residues include Glu209 and Glu235. The active-site Proton acceptor is His285.

The protein belongs to the mandelate racemase/muconate lactonizing enzyme family. GalD subfamily. Mg(2+) is required as a cofactor.

It carries out the reaction D-galactonate = 2-dehydro-3-deoxy-D-galactonate + H2O. Its pathway is carbohydrate acid metabolism; D-galactonate degradation; D-glyceraldehyde 3-phosphate and pyruvate from D-galactonate: step 1/3. Its function is as follows. Catalyzes the dehydration of D-galactonate to 2-keto-3-deoxy-D-galactonate. The polypeptide is D-galactonate dehydratase (Variovorax paradoxus (strain S110)).